A 384-amino-acid polypeptide reads, in one-letter code: uncharacterized protein (384 aa).

This sequence to S.pombe SpAC2E11.17.

This is an uncharacterized protein from Schizosaccharomyces pombe (strain 972 / ATCC 24843) (Fission yeast).